A 211-amino-acid polypeptide reads, in one-letter code: Ubiquitin-conjugating enzyme E2 S-C (211 aa).

Residues 11–157 (HIIRRVYKEV…AKLMTEIHAQ (147 aa)) enclose the UBC core domain. C95 (glycyl thioester intermediate) is an active-site residue. Positions 158–211 (GSTLRGKDPTDPCSSASATVVSGDGPMAKKHAGDRDKKLAAKKKTDKKRALRRL) are disordered. Residues 197-211 (AAKKKTDKKRALRRL) are compositionally biased toward basic residues.

Belongs to the ubiquitin-conjugating enzyme family.

The catalysed reaction is S-ubiquitinyl-[E1 ubiquitin-activating enzyme]-L-cysteine + [E2 ubiquitin-conjugating enzyme]-L-cysteine = [E1 ubiquitin-activating enzyme]-L-cysteine + S-ubiquitinyl-[E2 ubiquitin-conjugating enzyme]-L-cysteine.. It functions in the pathway protein modification; protein ubiquitination. Its function is as follows. Catalyzes the covalent attachment of ubiquitin to other proteins. Acts as an essential factor of the anaphase promoting complex/cyclosome (APC/C), a cell cycle-regulated ubiquitin ligase that controls progression through mitosis. Acts by specifically elongating 'Lys-11'-linked polyubiquitin chains initiated by the E2 enzyme ube2c/ubch10 on APC/C substrates, enhancing the degradation of APC/C substrates by the proteasome and promoting mitotic exit. The chain is Ubiquitin-conjugating enzyme E2 S-C (ube2s-c) from Xenopus laevis (African clawed frog).